The following is a 231-amino-acid chain: Thermonuclease (231 aa).

Positions 1–26 are cleaved as a signal peptide; the sequence is MLVMTEYLLSAGICMAIVSILLIGMA. 2 propeptides span residues 27-63 and 64-82; these read ISNV…SANA and SQTD…TVYS. Residues 61–73 are compositionally biased toward polar residues; that stretch reads ANASQTDNGVNRS. Residues 61-86 are disordered; the sequence is ANASQTDNGVNRSGSEDPTVYSATST. Aspartate 103 serves as a coordination point for Ca(2+). Arginine 117 is a catalytic residue. The Ca(2+) site is built by aspartate 122 and threonine 123. Catalysis depends on residues glutamate 125 and arginine 169. The span at 203–219 shows a compositional bias: basic and acidic residues; it reads HEQHLRKSEAQAKKEKL. The interval 203–231 is disordered; the sequence is HEQHLRKSEAQAKKEKLNIWSEDNADSGQ.

The protein belongs to the thermonuclease family. Ca(2+) serves as cofactor.

It is found in the secreted. The protein resides in the membrane. The enzyme catalyses Endonucleolytic cleavage to nucleoside 3'-phosphates and 3'-phosphooligonucleotide end-products.. Functionally, enzyme that catalyzes the hydrolysis of both DNA and RNA at the 5' position of the phosphodiester bond. In Staphylococcus aureus, this protein is Thermonuclease.